The chain runs to 152 residues: Transcriptional regulator MraZ (152 aa).

2 consecutive SpoVT-AbrB domains span residues 5-52 (ASAI…PLDE) and 81-124 (AHEC…DETA).

This sequence belongs to the MraZ family. As to quaternary structure, forms oligomers.

It localises to the cytoplasm. It is found in the nucleoid. The polypeptide is Transcriptional regulator MraZ (Shewanella woodyi (strain ATCC 51908 / MS32)).